A 444-amino-acid chain; its full sequence is Putative F-box protein At1g64540 (444 aa).

Positions Arg-4–Glu-50 constitute an F-box domain.

The sequence is that of Putative F-box protein At1g64540 from Arabidopsis thaliana (Mouse-ear cress).